The sequence spans 285 residues: Vesicle-associated membrane protein 725 (285 aa).

Residues 1 to 261 are Cytoplasmic-facing; it reads MDRSVVPISL…MWFENMKIKL (261 aa). Residues 75–179 form the Longin domain; the sequence is FVARGTVILV…SLNREFGSKL (105 aa). Residues 195 to 255 enclose the v-SNARE coiled-coil homology domain; it reads KLAKVKAQVT…TKIRRKMWFE (61 aa). Residues 262–282 traverse the membrane as a helical; Anchor for type IV membrane protein segment; it reads IVLGIIITLILIIILSVCGGF. The Vesicular segment spans residues 283 to 285; sequence KCT.

This sequence belongs to the synaptobrevin family. As to expression, expressed in flowers, leaves, stems and roots.

It localises to the cell membrane. Its subcellular location is the early endosome membrane. In terms of biological role, involved in the targeting and/or fusion of transport vesicles to their target membrane. This Arabidopsis thaliana (Mouse-ear cress) protein is Vesicle-associated membrane protein 725.